Reading from the N-terminus, the 899-residue chain is Alanine--tRNA ligase (899 aa).

4 residues coordinate Zn(2+): histidine 595, histidine 599, cysteine 703, and histidine 707.

It belongs to the class-II aminoacyl-tRNA synthetase family. The cofactor is Zn(2+).

It is found in the cytoplasm. The catalysed reaction is tRNA(Ala) + L-alanine + ATP = L-alanyl-tRNA(Ala) + AMP + diphosphate. Catalyzes the attachment of alanine to tRNA(Ala) in a two-step reaction: alanine is first activated by ATP to form Ala-AMP and then transferred to the acceptor end of tRNA(Ala). Also edits incorrectly charged Ser-tRNA(Ala) and Gly-tRNA(Ala) via its editing domain. In Caldivirga maquilingensis (strain ATCC 700844 / DSM 13496 / JCM 10307 / IC-167), this protein is Alanine--tRNA ligase.